A 209-amino-acid polypeptide reads, in one-letter code: Ras-like GTP-binding protein RYL2 (209 aa).

Position 12–19 (12–19) interacts with GTP; the sequence is GAQGVGKT. The Effector region signature appears at 34-42; it reads QASTIGASF. GTP contacts are provided by residues 60–64 and 118–121; these read DTAGQ and TKVD. S-geranylgeranyl cysteine attachment occurs at residues Cys-208 and Cys-209.

It belongs to the small GTPase superfamily. Rab family.

The protein resides in the cell membrane. Protein transport. Probably involved in vesicular traffic. The sequence is that of Ras-like GTP-binding protein RYL2 (RYL2) from Yarrowia lipolytica (strain CLIB 122 / E 150) (Yeast).